We begin with the raw amino-acid sequence, 370 residues long: Glutathione S-transferase omega-like 2 (370 aa).

Arg-15 contributes to the glutathione binding site. Cys-46 acts as the Nucleophile in catalysis. 5 residues coordinate glutathione: Trp-79, Arg-155, Val-158, Glu-173, and Ser-174. A GST C-terminal domain is found at 201-353; that stretch reads PAQLKTQIDD…LHYTRSHTRI (153 aa).

The protein belongs to the GST superfamily. Omega family. Homodimer.

The protein localises to the cytoplasm. It catalyses the reaction RX + glutathione = an S-substituted glutathione + a halide anion + H(+). The catalysed reaction is L-dehydroascorbate + 2 glutathione = glutathione disulfide + L-ascorbate. Functionally, active as '1-Cys' thiol transferase against beta-hydroxyethyl disulfide (HED), as dehydroascorbate reductase and as dimethylarsinic acid reductase, while not active against the standard GST substrate 1-chloro-2,4-dinitrobenzene (CDNB). May be involved in cell wall organization and biogenesis. This is Glutathione S-transferase omega-like 2 from Saccharomyces cerevisiae (strain ATCC 204508 / S288c) (Baker's yeast).